Here is a 631-residue protein sequence, read N- to C-terminus: tRNA uridine 5-carboxymethylaminomethyl modification enzyme MnmG (631 aa).

Residues 13–18, Val-125, and Ser-180 each bind FAD; that span reads GGGHAG. 273-287 is an NAD(+) binding site; the sequence is GPRYCPSIEDKVMRF. Gln-370 lines the FAD pocket.

The protein belongs to the MnmG family. As to quaternary structure, homodimer. Heterotetramer of two MnmE and two MnmG subunits. Requires FAD as cofactor.

The protein resides in the cytoplasm. In terms of biological role, NAD-binding protein involved in the addition of a carboxymethylaminomethyl (cmnm) group at the wobble position (U34) of certain tRNAs, forming tRNA-cmnm(5)s(2)U34. The protein is tRNA uridine 5-carboxymethylaminomethyl modification enzyme MnmG of Vibrio parahaemolyticus serotype O3:K6 (strain RIMD 2210633).